Consider the following 35-residue polypeptide: Conotoxin Cl6.16 (35 aa).

3 disulfides stabilise this stretch: cysteine 10–cysteine 22, cysteine 16–cysteine 27, and cysteine 21–cysteine 34.

As to expression, expressed by the venom duct.

It is found in the secreted. The protein is Conotoxin Cl6.16 of Californiconus californicus (California cone).